The following is a 136-amino-acid chain: MLSPKRTRFRKQHRGRMKGKSCRGNRICFGRYALQALEPAWITARQIEAGRRAITRYARRGGKIWVRIFPDKPVTLRPTETRMGSGKGSPEYWVAIVKPGRILYEMGGVSETIARAAMEIAASKMPIRSQFIRLEI.

The segment at 1–20 is disordered; that stretch reads MLSPKRTRFRKQHRGRMKGK.

This sequence belongs to the universal ribosomal protein uL16 family. Part of the 50S ribosomal subunit.

The protein resides in the plastid. The protein localises to the chloroplast. The protein is Large ribosomal subunit protein uL16c of Lolium perenne (Perennial ryegrass).